Consider the following 385-residue polypeptide: Succinate--CoA ligase [ADP-forming] subunit beta (385 aa).

In terms of domain architecture, ATP-grasp spans 9–240 (KEIFAKYGIP…ETQLPQLEVE (232 aa)). ATP contacts are provided by residues lysine 46, 53 to 55 (GRG), glutamate 98, threonine 101, and glutamate 106. Residues asparagine 195 and aspartate 209 each contribute to the Mg(2+) site. Substrate-binding positions include asparagine 260 and 317–319 (GIL).

The protein belongs to the succinate/malate CoA ligase beta subunit family. As to quaternary structure, heterotetramer of two alpha and two beta subunits. The cofactor is Mg(2+).

It carries out the reaction succinate + ATP + CoA = succinyl-CoA + ADP + phosphate. The catalysed reaction is GTP + succinate + CoA = succinyl-CoA + GDP + phosphate. It participates in carbohydrate metabolism; tricarboxylic acid cycle; succinate from succinyl-CoA (ligase route): step 1/1. Succinyl-CoA synthetase functions in the citric acid cycle (TCA), coupling the hydrolysis of succinyl-CoA to the synthesis of either ATP or GTP and thus represents the only step of substrate-level phosphorylation in the TCA. The beta subunit provides nucleotide specificity of the enzyme and binds the substrate succinate, while the binding sites for coenzyme A and phosphate are found in the alpha subunit. The protein is Succinate--CoA ligase [ADP-forming] subunit beta of Aquifex aeolicus (strain VF5).